The primary structure comprises 944 residues: Isoleucine--tRNA ligase (944 aa).

Positions 58–68 (PYANGSIHIGH) match the 'HIGH' region motif. L-isoleucyl-5'-AMP is bound at residue glutamate 563. The 'KMSKS' region signature appears at 604 to 608 (KMSKS). Residue lysine 607 participates in ATP binding. Positions 907, 910, 927, and 930 each coordinate Zn(2+).

This sequence belongs to the class-I aminoacyl-tRNA synthetase family. IleS type 1 subfamily. Monomer. The cofactor is Zn(2+).

The protein localises to the cytoplasm. The enzyme catalyses tRNA(Ile) + L-isoleucine + ATP = L-isoleucyl-tRNA(Ile) + AMP + diphosphate. Functionally, catalyzes the attachment of isoleucine to tRNA(Ile). As IleRS can inadvertently accommodate and process structurally similar amino acids such as valine, to avoid such errors it has two additional distinct tRNA(Ile)-dependent editing activities. One activity is designated as 'pretransfer' editing and involves the hydrolysis of activated Val-AMP. The other activity is designated 'posttransfer' editing and involves deacylation of mischarged Val-tRNA(Ile). The protein is Isoleucine--tRNA ligase of Salmonella typhimurium (strain LT2 / SGSC1412 / ATCC 700720).